Here is a 333-residue protein sequence, read N- to C-terminus: Anthranilate phosphoribosyltransferase (333 aa).

5-phospho-alpha-D-ribose 1-diphosphate contacts are provided by residues glycine 81, 84-85, threonine 89, 91-94, 109-117, and alanine 121; these read GD, NIST, and KHGNRSVSS. Anthranilate is bound at residue glycine 81. Serine 93 is a binding site for Mg(2+). An anthranilate-binding site is contributed by asparagine 112. Arginine 167 lines the anthranilate pocket. Aspartate 225 and glutamate 226 together coordinate Mg(2+).

This sequence belongs to the anthranilate phosphoribosyltransferase family. Homodimer. Requires Mg(2+) as cofactor.

The enzyme catalyses N-(5-phospho-beta-D-ribosyl)anthranilate + diphosphate = 5-phospho-alpha-D-ribose 1-diphosphate + anthranilate. It participates in amino-acid biosynthesis; L-tryptophan biosynthesis; L-tryptophan from chorismate: step 2/5. Catalyzes the transfer of the phosphoribosyl group of 5-phosphorylribose-1-pyrophosphate (PRPP) to anthranilate to yield N-(5'-phosphoribosyl)-anthranilate (PRA). This Haemophilus influenzae (strain 86-028NP) protein is Anthranilate phosphoribosyltransferase.